A 151-amino-acid chain; its full sequence is Deoxyuridine 5'-triphosphate nucleotidohydrolase (151 aa).

Substrate-binding positions include 70–72 (RSG), asparagine 83, and 87–89 (LID).

Belongs to the dUTPase family. It depends on Mg(2+) as a cofactor.

It catalyses the reaction dUTP + H2O = dUMP + diphosphate + H(+). It functions in the pathway pyrimidine metabolism; dUMP biosynthesis; dUMP from dCTP (dUTP route): step 2/2. Functionally, this enzyme is involved in nucleotide metabolism: it produces dUMP, the immediate precursor of thymidine nucleotides and it decreases the intracellular concentration of dUTP so that uracil cannot be incorporated into DNA. The polypeptide is Deoxyuridine 5'-triphosphate nucleotidohydrolase (Methylococcus capsulatus (strain ATCC 33009 / NCIMB 11132 / Bath)).